We begin with the raw amino-acid sequence, 184 residues long: Uroplakin-2 (184 aa).

A signal peptide spans 1-25; it reads MAPLLPIRTLPLILILLALLSPGAA. A propeptide spanning residues 26–84 is cleaved from the precursor; that stretch reads DFNISSLSGLLSPALTESLLVALPPCHLTGGNATLMVRRANDSKVVTSSFVVPPCRGRR. Residues asparagine 28, asparagine 57, and asparagine 66 are each glycosylated (N-linked (GlcNAc...) asparagine). Residues 85-155 are Lumenal-facing; that stretch reads ELVSVVDSGA…IGLGMARTGG (71 aa). A helical membrane pass occupies residues 156–176; that stretch reads MVVITVLLSVAMFLLVLGFII. The Cytoplasmic portion of the chain corresponds to 177-184; the sequence is ALALGSRK.

It belongs to the uroplakin-2 family. In terms of assembly, interacts with uroplakin-1a (UPK1A). As to expression, expressed in ureter.

It is found in the cell membrane. Functionally, component of the asymmetric unit membrane (AUM); a highly specialized biomembrane elaborated by terminally differentiated urothelial cells. May play an important role in regulating the assembly of the AUM. The polypeptide is Uroplakin-2 (UPK2) (Homo sapiens (Human)).